The chain runs to 274 residues: Large ribosomal subunit protein uL2cz/uL2cy (274 aa).

Disordered stretches follow at residues 1-21 (MAIH…VDSQ) and 225-274 (PVDH…RRSK).

It belongs to the universal ribosomal protein uL2 family. In terms of assembly, part of the 50S ribosomal subunit.

The protein resides in the plastid. Its subcellular location is the chloroplast. The polypeptide is Large ribosomal subunit protein uL2cz/uL2cy (rpl2-A) (Arabidopsis thaliana (Mouse-ear cress)).